The sequence spans 202 residues: Ion-translocating oxidoreductase complex subunit G (202 aa).

The helical transmembrane segment at 11–31 (ACLMGFFSFFSLSSVIFVKNI) threads the bilayer. Residue threonine 176 is modified to FMN phosphoryl threonine.

This sequence belongs to the RnfG family. As to quaternary structure, the complex is composed of six subunits: RnfA, RnfB, RnfC, RnfD, RnfE and RnfG. It depends on FMN as a cofactor.

It is found in the cell inner membrane. Part of a membrane-bound complex that couples electron transfer with translocation of ions across the membrane. The sequence is that of Ion-translocating oxidoreductase complex subunit G from Buchnera aphidicola subsp. Schizaphis graminum (strain Sg).